Reading from the N-terminus, the 516-residue chain is Monocarboxylate transporter 12 (516 aa).

Residues 1–50 are Cytoplasmic-facing; the sequence is MPSGSHWTANSSKIITWLLEQPGKEEKRKTMAKVNRARSTSPPDGGWGWM. The next 12 membrane-spanning stretches (helical) occupy residues 51–73, 88–108, 116–136, 145–165, 178–198, 207–227, 283–303, 319–339, 350–370, 377–397, 410–430, and 440–460; these read IVAG…SIFF, AWIH…GSVV, VGIM…SFAT, LGVL…AMVG, IAMS…QLLI, LLIL…MRPI, FVVL…LFVY, AFLM…FGWL, YVCY…LPML, VPFS…IPVV, ALGV…PIAG, and TAAF…LGFA. Topologically, residues 461 to 516 are cytoplasmic; that stretch reads RLIKRMRKTQLQFIAKESDPKLQLWTNGSVAYSVARELDQKHGEPVATAVPGYSLT.

It belongs to the major facilitator superfamily. Monocarboxylate porter (TC 2.A.1.13) family. As to quaternary structure, interacts with isoform 2 of BSG; this interaction is required for its localization to the plasma membrane. As to expression, most highly expressed in kidney, followed by retina, lung, heart and testis. Very weakly expressed in brain and liver. Also detected in lens.

The protein localises to the cell membrane. The protein resides in the basolateral cell membrane. It carries out the reaction creatine(in) = creatine(out). The catalysed reaction is guanidinoacetate(in) = guanidinoacetate(out). With respect to regulation, creatine uptake is inhibited by carbonyl cyanide 3-chlorophenylhydrazone (CCCP) and by valinomycin. In terms of biological role, functions as a transporter for creatine and as well for its precursor guanidinoacetate. Transport of creatine and GAA is independent of resting membrane potential and extracellular Na(+), Cl(-), or pH. Contributes to the process of creatine biosynthesis and distribution. The polypeptide is Monocarboxylate transporter 12 (Homo sapiens (Human)).